The primary structure comprises 89 residues: Small ribosomal subunit protein uS14 (89 aa).

Belongs to the universal ribosomal protein uS14 family. As to quaternary structure, part of the 30S ribosomal subunit. Contacts proteins S3 and S10.

Functionally, binds 16S rRNA, required for the assembly of 30S particles and may also be responsible for determining the conformation of the 16S rRNA at the A site. This Deinococcus radiodurans (strain ATCC 13939 / DSM 20539 / JCM 16871 / CCUG 27074 / LMG 4051 / NBRC 15346 / NCIMB 9279 / VKM B-1422 / R1) protein is Small ribosomal subunit protein uS14.